A 260-amino-acid polypeptide reads, in one-letter code: Putative nudix hydrolase 6 (260 aa).

In terms of domain architecture, Nudix hydrolase spans 113 to 257 (PNHAADPIVS…SHFIDLLKES (145 aa)). The Nudix box signature appears at 148 to 170 (GMVDAGEHVSQTLRREFAEEAMH). Glu163 and Glu167 together coordinate Mg(2+).

This sequence belongs to the Nudix hydrolase family. Mg(2+) is required as a cofactor. Requires Mn(2+) as cofactor.

Functionally, probably mediates the hydrolysis of some nucleoside diphosphate derivatives. The polypeptide is Putative nudix hydrolase 6 (ndx-6) (Caenorhabditis elegans).